Consider the following 134-residue polypeptide: Putative transposase InsN for insertion sequence element IS911A (134 aa).

It belongs to the transposase 8 family.

In terms of biological role, involved in the transposition of the insertion sequence IS911. In Escherichia coli (strain K12), this protein is Putative transposase InsN for insertion sequence element IS911A (insN1).